The sequence spans 278 residues: Digeranylgeranylglyceryl phosphate synthase (278 aa).

Helical transmembrane passes span 12–32 (LKNC…ASYF), 34–54 (LATV…CGFG), 91–111 (LLVF…LMAV), 129–149 (IIGN…GGIA), 153–173 (IDVT…REII), 204–224 (FLLV…FFGI), 225–245 (YYML…YNLV), and 257–277 (SRNI…GSLF).

The protein belongs to the UbiA prenyltransferase family. DGGGP synthase subfamily. Mg(2+) serves as cofactor.

It localises to the cell membrane. The enzyme catalyses sn-3-O-(geranylgeranyl)glycerol 1-phosphate + (2E,6E,10E)-geranylgeranyl diphosphate = 2,3-bis-O-(geranylgeranyl)-sn-glycerol 1-phosphate + diphosphate. The protein operates within membrane lipid metabolism; glycerophospholipid metabolism. In terms of biological role, prenyltransferase that catalyzes the transfer of the geranylgeranyl moiety of geranylgeranyl diphosphate (GGPP) to the C2 hydroxyl of (S)-3-O-geranylgeranylglyceryl phosphate (GGGP). This reaction is the second ether-bond-formation step in the biosynthesis of archaeal membrane lipids. The sequence is that of Digeranylgeranylglyceryl phosphate synthase from Methanococcus maripaludis (strain C7 / ATCC BAA-1331).